A 283-amino-acid chain; its full sequence is uncharacterized protein (283 aa).

Residues 172–270 (EAIRDYIDER…ERSPSEYRRQ (99 aa)) enclose the HTH araC/xylS-type domain. 2 consecutive DNA-binding regions (H-T-H motif) follow at residues 189–210 (ESVA…QKTG) and 237–260 (VKEV…RKNT).

This is an uncharacterized protein from Escherichia coli (strain K12).